Reading from the N-terminus, the 464-residue chain is MSLSLWQQCLARLQDELPATEFSMWIRPLQAELSDNTLALYAPNRFVLDWVRDKYLNNINGLLNDFCGTDAPLLRFEVGSKPITQVISQTVTASVSSAPAAPAARTAAPSRPSWDNAAAQPELSYRSNVNPKHTFDNFVEGKSNQLARAAARQVADNPGGAYNPLFLYGGTGLGKTHLLHAVGNGIMARKANAKVVYMHSERFVQDMVKALQNNAIEEFKRYYRSVDALLIDDIQFFANKERSQEEFFHTFNALLEGNQQIILTSDRYPKEINGVEDRLKSRFGWGLTVAIEPPELETRVAILMKKADENDIRLPGEVAFFIAKRLRSNVRELEGALNRVIANANFTGRAITIDFVREALRDLLALQEKLVTIDNIQKTVAEYYKIKVADLLSKRRSRSVARPRQMAMALAKELTNHSLPEIGDAFGGRDHTTVLHACRKIEQLREESHDIKEDFSNLIRTLSS.

The segment at 1–82 (MSLSLWQQCL…LLRFEVGSKP (82 aa)) is domain I, interacts with DnaA modulators. The interval 82–127 (PITQVISQTVTASVSSAPAAPAARTAAPSRPSWDNAAAQPELSYRS) is domain II. Residues 98-113 (APAAPAARTAAPSRPS) are compositionally biased toward low complexity. Positions 98–117 (APAAPAARTAAPSRPSWDNA) are disordered. The tract at residues 128 to 344 (NVNPKHTFDN…GALNRVIANA (217 aa)) is domain III, AAA+ region. The ATP site is built by Gly-172, Gly-174, Lys-175, and Thr-176. The segment at 345–464 (NFTGRAITID…FSNLIRTLSS (120 aa)) is domain IV, binds dsDNA.

Belongs to the DnaA family. In terms of assembly, oligomerizes as a right-handed, spiral filament on DNA at oriC.

The protein resides in the cytoplasm. In terms of biological role, plays an important role in the initiation and regulation of chromosomal replication. Binds to the origin of replication; it binds specifically double-stranded DNA at a 9 bp consensus (dnaA box): 5'-TTATC[CA]A[CA]A-3'. DnaA binds to ATP and to acidic phospholipids. DnaA can inhibit its own gene expression as well as that of other genes. Plays an essential role in the initiation and regulation of chromosomal replication. ATP-DnaA binds to the origin of replication (oriC) to initiate formation of the DNA replication initiation complex once per cell cycle. Binds the DnaA box (a 9 base pair repeat at the origin) and separates the double-stranded (ds)DNA. Forms a right-handed helical filament on oriC DNA; dsDNA binds to the exterior of the filament while single-stranded (ss)DNA is stabiized in the filament's interior. The ATP-DnaA-oriC complex binds and stabilizes one strand of the AT-rich DNA unwinding element (DUE), permitting loading of DNA polymerase. After initiation quickly degrades to an ADP-DnaA complex that is not apt for DNA replication. Binds acidic phospholipids. The polypeptide is Chromosomal replication initiator protein DnaA (Serratia marcescens).